The primary structure comprises 605 residues: Elongation factor 4 (605 aa).

A tr-type G domain is found at 11 to 193 (KNIRNFSIIA…RLVDVIPAPE (183 aa)). GTP-binding positions include 23 to 28 (DHGKST) and 140 to 143 (NKID).

The protein belongs to the TRAFAC class translation factor GTPase superfamily. Classic translation factor GTPase family. LepA subfamily.

The protein resides in the cell inner membrane. It catalyses the reaction GTP + H2O = GDP + phosphate + H(+). Required for accurate and efficient protein synthesis under certain stress conditions. May act as a fidelity factor of the translation reaction, by catalyzing a one-codon backward translocation of tRNAs on improperly translocated ribosomes. Back-translocation proceeds from a post-translocation (POST) complex to a pre-translocation (PRE) complex, thus giving elongation factor G a second chance to translocate the tRNAs correctly. Binds to ribosomes in a GTP-dependent manner. The sequence is that of Elongation factor 4 from Acinetobacter baylyi (strain ATCC 33305 / BD413 / ADP1).